The sequence spans 305 residues: GMP synthase [glutamine-hydrolyzing] subunit B (305 aa).

A GMPS ATP-PPase domain is found at Val-2–Arg-184. Ser-29–Ser-35 lines the ATP pocket.

As to quaternary structure, heterodimer composed of a glutamine amidotransferase subunit (A) and a GMP-binding subunit (B).

It carries out the reaction XMP + L-glutamine + ATP + H2O = GMP + L-glutamate + AMP + diphosphate + 2 H(+). Its pathway is purine metabolism; GMP biosynthesis; GMP from XMP (L-Gln route): step 1/1. Its function is as follows. Catalyzes the synthesis of GMP from XMP. In Methanoregula boonei (strain DSM 21154 / JCM 14090 / 6A8), this protein is GMP synthase [glutamine-hydrolyzing] subunit B.